The primary structure comprises 547 residues: Rho GTPase-activating protein 36 (547 aa).

The first 40 residues, 1–40 (MGGCIPFLKAARALCPRIMPPLLLLSAFIFLVSVLGGAPG), serve as a signal peptide directing secretion. The Rho-GAP domain occupies 226-426 (MSLNPIAKQI…AMIDNWDVLF (201 aa)). The tract at residues 485–547 (AVLAQSKPSD…AKTGVSYFFP (63 aa)) is disordered. The segment covering 524–539 (EQDRPLLRVPREKEAK) has biased composition (basic and acidic residues).

As to quaternary structure, may interacts (via the Rho-GAP domain) with the active form of RAC1. In terms of tissue distribution, detected in the outer root sheath of hair follicles at the level of the stem cell bulge, during the anagen and telogen phases of hair growth (at protein level).

GTPase activator for the Rho-type GTPases by converting them to an inactive GDP-bound state. The sequence is that of Rho GTPase-activating protein 36 (ARHGAP36) from Homo sapiens (Human).